The sequence spans 161 residues: Pathogenesis-related protein 1 (161 aa).

The signal sequence occupies residues 1 to 26 (MKVTSYSRILIILAALVGALVVPLKA). In terms of domain architecture, SCP spans 34 to 149 (VNAHNQARSQ…NGGTIISCNY (116 aa)). Cystine bridges form between Cys-70–Cys-138, Cys-113–Cys-117, and Cys-133–Cys-147.

It belongs to the CRISP family. As to expression, expressed in flowers, stems and roots but not in leaves.

Probably involved in the defense reaction of plants against pathogens. This is Pathogenesis-related protein 1 from Arabidopsis thaliana (Mouse-ear cress).